The primary structure comprises 46 residues: Endochitinase 2 (46 aa).

The protein belongs to the glycosyl hydrolase 19 family. Chitinase class I subfamily.

It carries out the reaction Random endo-hydrolysis of N-acetyl-beta-D-glucosaminide (1-&gt;4)-beta-linkages in chitin and chitodextrins.. Its function is as follows. Defense against chitin-containing fungal and bacterial pathogens. This Arachis hypogaea (Peanut) protein is Endochitinase 2.